A 162-amino-acid chain; its full sequence is Nitric oxide synthase, inducible (162 aa).

Positions 24–37 are enriched in polar residues; the sequence is LQYHSLSKQQNESP. The interval 24–65 is disordered; the sequence is LQYHSLSKQQNESPQPLVGTGKKSPESLVKPDATPLSSPRHV. 2 residues coordinate Zn(2+): cysteine 90 and cysteine 95. Serine 98 provides a ligand contact to (6R)-L-erythro-5,6,7,8-tetrahydrobiopterin. Position 132 (glutamate 132) interacts with L-arginine. Residue histidine 160 coordinates FAD.

This sequence belongs to the NOS family. In terms of assembly, homodimer. Interacts with NHERF1. Interacts with GAPDH; induced by oxidatively-modified low-densitity lipoprotein (LDL(ox)). Interacts with S100A8 and S100A9 to form the iNOS-S100A8/9 transnitrosylase complex. Interacts with SPSB1, SPSB2 and SPSB4. Interacts with ELOC and CUL5 in the presence of SPSB1 or SPSB2 or SPSB4. Forms a complex with ASL, ASS1 and HSP90AA1; the complex regulates cell-autonomous L-arginine synthesis and citrulline recycling while channeling extracellular L-arginine to nitric oxide synthesis pathway. Heme b is required as a cofactor. It depends on FAD as a cofactor. The cofactor is FMN. Requires (6R)-L-erythro-5,6,7,8-tetrahydrobiopterin as cofactor. Polyubiquitinated; mediated by SPSB1, SPSB2 and SPSB4, leading to proteasomal degradation.

It localises to the cytoplasm. The protein localises to the cytosol. It catalyses the reaction 2 L-arginine + 3 NADPH + 4 O2 + H(+) = 2 L-citrulline + 2 nitric oxide + 3 NADP(+) + 4 H2O. Its activity is regulated as follows. Regulated by calcium/calmodulin. Its function is as follows. Produces nitric oxide (NO) which is a messenger molecule with diverse functions throughout the body. In macrophages, NO mediates tumoricidal and bactericidal actions. Also has nitrosylase activity and mediates cysteine S-nitrosylation of cytoplasmic target proteins such PTGS2/COX2. As component of the iNOS-S100A8/9 transnitrosylase complex involved in the selective inflammatory stimulus-dependent S-nitrosylation of GAPDH implicated in regulation of the GAIT complex activity and probably multiple targets including ANXA5, EZR, MSN and VIM. Involved in inflammation, enhances the synthesis of pro-inflammatory mediators such as IL6 and IL8. This chain is Nitric oxide synthase, inducible (NOS2), found in Macaca mulatta (Rhesus macaque).